The primary structure comprises 77 residues: Acyl carrier protein (77 aa).

Positions serine 2 to glutamine 77 constitute a Carrier domain. The residue at position 37 (serine 37) is an O-(pantetheine 4'-phosphoryl)serine.

Belongs to the acyl carrier protein (ACP) family. 4'-phosphopantetheine is transferred from CoA to a specific serine of apo-ACP by AcpS. This modification is essential for activity because fatty acids are bound in thioester linkage to the sulfhydryl of the prosthetic group.

The protein resides in the cytoplasm. The protein operates within lipid metabolism; fatty acid biosynthesis. Carrier of the growing fatty acid chain in fatty acid biosynthesis. The sequence is that of Acyl carrier protein from Shewanella denitrificans (strain OS217 / ATCC BAA-1090 / DSM 15013).